The following is a 129-amino-acid chain: Small ribosomal subunit protein uS12 (129 aa).

The protein belongs to the universal ribosomal protein uS12 family. As to quaternary structure, part of the 30S ribosomal subunit. Contacts proteins S8 and S17. May interact with IF1 in the 30S initiation complex.

With S4 and S5 plays an important role in translational accuracy. Its function is as follows. Interacts with and stabilizes bases of the 16S rRNA that are involved in tRNA selection in the A site and with the mRNA backbone. Located at the interface of the 30S and 50S subunits, it traverses the body of the 30S subunit contacting proteins on the other side and probably holding the rRNA structure together. The combined cluster of proteins S8, S12 and S17 appears to hold together the shoulder and platform of the 30S subunit. In Rickettsia typhi (strain ATCC VR-144 / Wilmington), this protein is Small ribosomal subunit protein uS12.